A 68-amino-acid chain; its full sequence is Phylloseptin-SP1 (68 aa).

The N-terminal stretch at 1–22 (MAFLKKSLFLVLFLGLVSLSIC) is a signal peptide. The propeptide occupies 23 to 45 (EEKERETKEEENEQEDDNREEKR). Leu67 carries the post-translational modification Leucine amide.

Expressed by the skin glands.

The protein localises to the secreted. In terms of biological role, weak cationic amphipathic alpha-helical antimicrobial peptide with weak activity against Gram-positive and Gram-negative bacteria and fungi. Has been tested against E.coli (MIC&gt;217.69 uM), S.aureus (MIC&gt;217.69 uM), K.pneumoniae (MIC&gt;189.00 uM) and C.albicans (MIC&gt;217.69 uM). Shows a moderate hemolytic activity. In Agalychnis spurrelli (Gliding leaf frog), this protein is Phylloseptin-SP1.